The following is a 601-amino-acid chain: Proteasome-associated ATPase (601 aa).

A compositionally biased stretch (gly residues) spans Met1–Gly15. The disordered stretch occupies residues Met1–Ala31. The segment covering Gly18–Ala31 has biased composition (basic and acidic residues). Residues Gly18–Gln106 are a coiled coil. Position 289 to 294 (Gly289 to Leu294) interacts with ATP. The docks into pockets in the proteasome alpha-ring stretch occupies residues Tyr600–Leu601.

This sequence belongs to the AAA ATPase family. As to quaternary structure, homohexamer. Assembles into a hexameric ring structure that caps the 20S proteasome core. Strongly interacts with the prokaryotic ubiquitin-like protein Pup through a hydrophobic interface; the interacting region of ARC lies in its N-terminal coiled-coil domain. There is one Pup binding site per ARC hexamer ring. Upon ATP-binding, the C-terminus of ARC interacts with the alpha-rings of the proteasome core, possibly by binding to the intersubunit pockets.

It functions in the pathway protein degradation; proteasomal Pup-dependent pathway. In terms of biological role, ATPase which is responsible for recognizing, binding, unfolding and translocation of pupylated proteins into the bacterial 20S proteasome core particle. May be essential for opening the gate of the 20S proteasome via an interaction with its C-terminus, thereby allowing substrate entry and access to the site of proteolysis. Thus, the C-termini of the proteasomal ATPase may function like a 'key in a lock' to induce gate opening and therefore regulate proteolysis. This chain is Proteasome-associated ATPase, found in Frankia alni (strain DSM 45986 / CECT 9034 / ACN14a).